Consider the following 186-residue polypeptide: Large ribosomal subunit protein uL22 (186 aa).

Residue Ser158 is modified to Phosphoserine. Residues 159–186 (KATDDEPAKKKLSKKKLQRQKEKMLRSE) form a disordered region. Thr161 is modified (phosphothreonine). Basic and acidic residues predominate over residues 177-186 (RQKEKMLRSE).

Belongs to the universal ribosomal protein uL22 family.

The chain is Large ribosomal subunit protein uL22 (RpL17) from Drosophila melanogaster (Fruit fly).